The primary structure comprises 180 residues: MLTRAQKEQLVKELSEVFKNSSLILFSDYKGLNVAQITDLRKKLREKLADGARYKVIKNSVAYLALKEAGYNVEEIEDVFSGPLAILYVEDGDPIEAIKVIYDFSKEMKGIPSFKGLYLDGKFFSADEVENLSKLPSKEQLLAMVVSGVQGPIRGLVNVLSGTLKNLLYALNAIKDKKSE.

It belongs to the universal ribosomal protein uL10 family. Part of the ribosomal stalk of the 50S ribosomal subunit. The N-terminus interacts with L11 and the large rRNA to form the base of the stalk. The C-terminus forms an elongated spine to which L12 dimers bind in a sequential fashion forming a multimeric L10(L12)X complex.

In terms of biological role, forms part of the ribosomal stalk, playing a central role in the interaction of the ribosome with GTP-bound translation factors. This chain is Large ribosomal subunit protein uL10, found in Thermosipho africanus (strain TCF52B).